An 88-amino-acid polypeptide reads, in one-letter code: Low calcium response locus protein S (88 aa).

It belongs to the transposase 8 family.

The chain is Low calcium response locus protein S (lcrS) from Yersinia pestis.